A 145-amino-acid polypeptide reads, in one-letter code: Probable WRKY transcription factor 75 (145 aa).

Over residues 20 to 38 the composition is skewed to basic and acidic residues; sequence SKPELHQGEEESSKVRSEG. Residues 20 to 55 form a disordered region; the sequence is SKPELHQGEEESSKVRSEGCSKSVESSKKKGKKQRY. Positions 61–126 form a DNA-binding region, WRKY; it reads SQVDILDDGY…YEGVHSHPIE (66 aa).

The protein belongs to the WRKY group II-c family.

Its subcellular location is the nucleus. Its function is as follows. Transcription factor. Interacts specifically with the W box (5'-(T)TGAC[CT]-3'), a frequently occurring elicitor-responsive cis-acting element. The chain is Probable WRKY transcription factor 75 (WRKY75) from Arabidopsis thaliana (Mouse-ear cress).